We begin with the raw amino-acid sequence, 254 residues long: 5'-nucleotidase SurE (254 aa).

4 residues coordinate a divalent metal cation: aspartate 8, aspartate 9, serine 40, and asparagine 93.

It belongs to the SurE nucleotidase family. A divalent metal cation serves as cofactor.

Its subcellular location is the cytoplasm. It catalyses the reaction a ribonucleoside 5'-phosphate + H2O = a ribonucleoside + phosphate. Functionally, nucleotidase that shows phosphatase activity on nucleoside 5'-monophosphates. The chain is 5'-nucleotidase SurE from Methylorubrum extorquens (strain CM4 / NCIMB 13688) (Methylobacterium extorquens).